The primary structure comprises 396 residues: MSDTLLNPYFGEFGGMYVPEILVPVLKQLEETFVAAQNDPLFQAEFTDLLKNYAGRPTALTLCRNLTKGSKTKLYLKREDLLHGGAHKTNQVLGQALLAKRMGKTRIIAETGAGQHGVATALACAMLDLPCVIYMGAKDVERQSPNVFRMRLMGAEVIPVQKGSCSLKDACCEAMRDWAANYETTHYLIGTAAGPHPFPTMVREFQKMIGEETKRQILEKENRLPDAVIAAVGGGSNAIGMFAGFIEEKSVQLIGVEPAGKGIETGEHGAPLKHGTTGIYFGMKSPIMQTKDGQIEESYSISAGLDFPSVGPQHAYLNSIGRAEYVSITNQEALDAFQALAQHEGIIPALESSHALAYALKLIAQNPDKEQLLVVNLSGRGDKDIFTVDKILNGGN.

Lys88 carries the N6-(pyridoxal phosphate)lysine modification.

It belongs to the TrpB family. In terms of assembly, tetramer of two alpha and two beta chains. The cofactor is pyridoxal 5'-phosphate.

It catalyses the reaction (1S,2R)-1-C-(indol-3-yl)glycerol 3-phosphate + L-serine = D-glyceraldehyde 3-phosphate + L-tryptophan + H2O. It participates in amino-acid biosynthesis; L-tryptophan biosynthesis; L-tryptophan from chorismate: step 5/5. Functionally, the beta subunit is responsible for the synthesis of L-tryptophan from indole and L-serine. The chain is Tryptophan synthase beta chain from Actinobacillus pleuropneumoniae serotype 3 (strain JL03).